Here is a 196-residue protein sequence, read N- to C-terminus: GTP cyclohydrolase 1 (196 aa).

3 residues coordinate Zn(2+): cysteine 85, histidine 88, and cysteine 158.

The protein belongs to the GTP cyclohydrolase I family. Homomer.

It carries out the reaction GTP + H2O = 7,8-dihydroneopterin 3'-triphosphate + formate + H(+). It functions in the pathway cofactor biosynthesis; 7,8-dihydroneopterin triphosphate biosynthesis; 7,8-dihydroneopterin triphosphate from GTP: step 1/1. The sequence is that of GTP cyclohydrolase 1 from Corynebacterium aurimucosum (strain ATCC 700975 / DSM 44827 / CIP 107346 / CN-1) (Corynebacterium nigricans).